Consider the following 167-residue polypeptide: Urease accessory protein UreE (167 aa).

Positions 135–167 are disordered; that stretch reads SGAYGGGHHHSHSHHEGDEFHSKPRLHHFGGSQ. The span at 157-167 shows a compositional bias: basic residues; sequence KPRLHHFGGSQ.

The protein belongs to the UreE family.

Its subcellular location is the cytoplasm. Functionally, involved in urease metallocenter assembly. Binds nickel. Probably functions as a nickel donor during metallocenter assembly. In Nitrosococcus oceani (strain ATCC 19707 / BCRC 17464 / JCM 30415 / NCIMB 11848 / C-107), this protein is Urease accessory protein UreE.